Reading from the N-terminus, the 89-residue chain is MDGIKYAVVTDKSLRLVSKNQYTFNVESGSTRTEIKSWVELFFGVKVIAMNSHRLPGKRRRMGHTMHYRRMIITLQPGYSIPSLINLII.

The protein belongs to the universal ribosomal protein uL23 family. Part of the 50S ribosomal subunit.

It localises to the plastid. The protein localises to the chloroplast. Functionally, binds to 23S rRNA. This Pelargonium hortorum (Common geranium) protein is Large ribosomal subunit protein uL23cz/uL23cy (rpl23-A).